The sequence spans 905 residues: Phosphatidylethanolamine N-methyltransferase (905 aa).

Polar residues-rich tracts occupy residues 1–22 (MTNQ…STSV) and 40–58 (DSNG…SSLN). Residues 1–73 (MTNQIPSASS…SEPERYGCTP (73 aa)) are disordered. Residues 1-104 (MTNQIPSASS…DPRFSKTPWD (104 aa)) lie on the Lumenal side of the membrane. The helical transmembrane segment at 105-125 (WIVISSILAQVLLFFMTTGAV) threads the bilayer. The Cytoplasmic portion of the chain corresponds to 126-128 (RRY). Residues 129 to 149 (SMMLCFFFWRISYDAGIGFLL) traverse the membrane as a helical segment. Over 150-209 (HMQSNHRKVVTWISDFGFFDKENHPKLYDLTKKQLISKMDSSYNYDTSPLEFNSWLVFRH) the chain is Lumenal. A helical transmembrane segment spans residues 210–230 (FVDLILMCDFCSYILMGLAWT). The Cytoplasmic portion of the chain corresponds to 231–236 (CWPKVN). Residues 237–257 (IILQFLRIFGGIALIVFNYWV) traverse the membrane as a helical segment. Topologically, residues 258–268 (KMDAHRVVRDY) are lumenal. A helical membrane pass occupies residues 269 to 289 (AWYWGDFFFLLRSSLVFNGVF). Residues 290-313 (ELAPHPMYSVGYAGYYGMSLLTGS) are Cytoplasmic-facing. Residues 314-334 (YAVLFASILAHAAQFGFLLFV) form a helical membrane-spanning segment. The Lumenal portion of the chain corresponds to 335-379 (ENPHIERTYGTDINHARLSPRGEDNEFELPPEHDLVGFVNFDFTR). Residue serine 353 is modified to Phosphoserine. The helical transmembrane segment at 380–400 (ISDVALLIIALYSIFIILLSS) threads the bilayer. Topologically, residues 401 to 408 (NSHYSQFW) are cytoplasmic. Residues 409 to 429 (AIFQAFVWRFLHSIIHAFILF) traverse the membrane as a helical segment. The Lumenal portion of the chain corresponds to 430–456 (YQSKSKAWTKHFIRNGESAAYAWSQWK). The chain crosses the membrane as a helical span at residues 457-479 (GLYNLTLNMSYISFVMAAWKLYH). The Cytoplasmic portion of the chain corresponds to 480 to 493 (LPSNWTYGLVSLRH). A helical membrane pass occupies residues 494 to 514 (ALGFGLIALHIYTSVSIYEDL). The Lumenal segment spans residues 515-552 (GQYGWFYGDFFLPSRSPKLVYQGIYRYVNNPERFLGCS). Residues 553-573 (AYWGLALISSSAWIFLIAILA) traverse the membrane as a helical segment. Over 574–905 (QLSNLAIIRL…FDGPSGAKDD (332 aa)) the chain is Cytoplasmic.

Belongs to the class VI-like SAM-binding methyltransferase superfamily. CHO2 family.

The protein resides in the endoplasmic reticulum membrane. The enzyme catalyses a 1,2-diacyl-sn-glycero-3-phosphoethanolamine + S-adenosyl-L-methionine = a 1,2-diacyl-sn-glycero-3-phospho-N-methylethanolamine + S-adenosyl-L-homocysteine + H(+). Its pathway is phospholipid metabolism; phosphatidylcholine biosynthesis. Its function is as follows. Catalyzes the first step of the methylation pathway of phosphatidylcholine biosynthesis, the SAM-dependent methylation of phosphatidylethanolamine (PE) to phosphatidylmonomethylethanolamine (PMME). The sequence is that of Phosphatidylethanolamine N-methyltransferase from Schizosaccharomyces pombe (strain 972 / ATCC 24843) (Fission yeast).